The primary structure comprises 273 residues: 2,3,4,5-tetrahydropyridine-2,6-dicarboxylate N-succinyltransferase (273 aa).

Arg-104 and Asp-141 together coordinate substrate.

The protein belongs to the transferase hexapeptide repeat family. In terms of assembly, homotrimer.

It localises to the cytoplasm. It carries out the reaction (S)-2,3,4,5-tetrahydrodipicolinate + succinyl-CoA + H2O = (S)-2-succinylamino-6-oxoheptanedioate + CoA. It functions in the pathway amino-acid biosynthesis; L-lysine biosynthesis via DAP pathway; LL-2,6-diaminopimelate from (S)-tetrahydrodipicolinate (succinylase route): step 1/3. This chain is 2,3,4,5-tetrahydropyridine-2,6-dicarboxylate N-succinyltransferase, found in Psychrobacter arcticus (strain DSM 17307 / VKM B-2377 / 273-4).